We begin with the raw amino-acid sequence, 398 residues long: Acetylornithine aminotransferase (398 aa).

Residues 105 to 106 (GA) and F138 contribute to the pyridoxal 5'-phosphate site. N(2)-acetyl-L-ornithine is bound at residue R141. 223-226 (DEVQ) contacts pyridoxal 5'-phosphate. K252 carries the N6-(pyridoxal phosphate)lysine modification. T280 contacts N(2)-acetyl-L-ornithine. Pyridoxal 5'-phosphate is bound at residue T281.

This sequence belongs to the class-III pyridoxal-phosphate-dependent aminotransferase family. ArgD subfamily. In terms of assembly, homodimer. Pyridoxal 5'-phosphate is required as a cofactor.

It localises to the cytoplasm. It carries out the reaction N(2)-acetyl-L-ornithine + 2-oxoglutarate = N-acetyl-L-glutamate 5-semialdehyde + L-glutamate. The protein operates within amino-acid biosynthesis; L-arginine biosynthesis; N(2)-acetyl-L-ornithine from L-glutamate: step 4/4. The sequence is that of Acetylornithine aminotransferase from Methanocaldococcus jannaschii (strain ATCC 43067 / DSM 2661 / JAL-1 / JCM 10045 / NBRC 100440) (Methanococcus jannaschii).